The sequence spans 83 residues: MADPVRQRILLAVCDVLYIDETDLIDGDATDLRDLGLDSVRFVLLMKRLGVDRESELPSRLAENLSIEGWVSELSQSELESPT.

Residues 3–83 (DPVRQRILLA…LSQSELESPT (81 aa)) form the Carrier domain. Position 39 is an O-(pantetheine 4'-phosphoryl)serine (Ser39).

It belongs to the acyl carrier protein (ACP) family. Requires pantetheine 4'-phosphate as cofactor.

It participates in lipid metabolism; fatty acid metabolism. Functionally, acyl-carrier protein (ACP) involved in the biosynthesis of a unique class of isonitrile lipopeptides (INLPs) that seem to play a role in metal acquisition in M.marinum. Is the dedicated ACP for the loading of activated acyl groups catalyzed by MmaC. In Mycobacterium marinum (strain ATCC BAA-535 / M), this protein is Acyl carrier protein MmaB.